The primary structure comprises 404 residues: 5-azacytidine-induced protein 2 (404 aa).

The homodimerization stretch occupies residues 1-198; it reads MDTLVEDDIC…TELQKARQTG (198 aa). Positions 40-198 form a coiled coil; it reads ALVTAYEDIK…TELQKARQTG (159 aa). An interaction with TBK1 and IKBKE region spans residues 229–269; it reads SDHMQHAYWELRREMANLHLVTRVQAELLRQLKTAAAGKAC. S330 carries the phosphoserine modification. Disordered regions lie at residues 332–351 and 356–390; these read TDNE…HNSY and LEDN…LPPL. Phosphoserine is present on S365.

As to quaternary structure, homodimer. Interacts with IKBKE, TBK1 and TICAM1. Interacts with TAX1BP1. Interacts with CALCOCO2. Post-translationally, ubiquitinated via 'Lys-48'-linked polyubiquitination by TRIM38, leading to its degradation.

Its subcellular location is the cytoplasm. Functionally, adapter protein which binds TBK1 and IKBKE playing a role in antiviral innate immunity. Activates serine/threonine-protein kinase TBK1 and facilitates its oligomerization. Enhances the phosphorylation of NF-kappa-B p65 subunit RELA by TBK1. Promotes TBK1-induced as well as TNF-alpha or PMA-induced activation of NF-kappa-B. Participates in IFNB promoter activation via TICAM1. The chain is 5-azacytidine-induced protein 2 (Azi2) from Rattus norvegicus (Rat).